Reading from the N-terminus, the 439-residue chain is C4-dicarboxylate transport protein (439 aa).

9 helical membrane passes run 9–29 (SLYA…HFLP), 45–65 (LIKM…IAGM), 77–97 (LALL…LIIV), 145–165 (AFAK…GFAL), 185–205 (VLFT…FGAM), 223–243 (LMGA…GIVT), 290–310 (VVGL…AIYL), 332–352 (TLLA…GSGF), and 353–373 (IVLA…LALI). The interval 417 to 439 (NESPQAADQPEKILDQTNTKLGA) is disordered.

Belongs to the dicarboxylate/amino acid:cation symporter (DAACS) (TC 2.A.23) family.

The protein resides in the cell inner membrane. Functionally, responsible for the transport of dicarboxylates such as succinate, fumarate, and malate from the periplasm across the membrane. This chain is C4-dicarboxylate transport protein, found in Janthinobacterium sp. (strain Marseille) (Minibacterium massiliensis).